A 339-amino-acid chain; its full sequence is Ketol-acid reductoisomerase (NADP(+)) (339 aa).

The KARI N-terminal Rossmann domain maps to M1–T182. Residues Y24–Q27, R48, S51, T53, and D83–Q86 each bind NADP(+). H108 is an active-site residue. Residue G134 participates in NADP(+) binding. The KARI C-terminal knotted domain maps to N183–I328. Mg(2+)-binding residues include D191, E195, E227, and E231. S252 provides a ligand contact to substrate.

It belongs to the ketol-acid reductoisomerase family. Mg(2+) is required as a cofactor.

The catalysed reaction is (2R)-2,3-dihydroxy-3-methylbutanoate + NADP(+) = (2S)-2-acetolactate + NADPH + H(+). It catalyses the reaction (2R,3R)-2,3-dihydroxy-3-methylpentanoate + NADP(+) = (S)-2-ethyl-2-hydroxy-3-oxobutanoate + NADPH + H(+). It functions in the pathway amino-acid biosynthesis; L-isoleucine biosynthesis; L-isoleucine from 2-oxobutanoate: step 2/4. It participates in amino-acid biosynthesis; L-valine biosynthesis; L-valine from pyruvate: step 2/4. Involved in the biosynthesis of branched-chain amino acids (BCAA). Catalyzes an alkyl-migration followed by a ketol-acid reduction of (S)-2-acetolactate (S2AL) to yield (R)-2,3-dihydroxy-isovalerate. In the isomerase reaction, S2AL is rearranged via a Mg-dependent methyl migration to produce 3-hydroxy-3-methyl-2-ketobutyrate (HMKB). In the reductase reaction, this 2-ketoacid undergoes a metal-dependent reduction by NADPH to yield (R)-2,3-dihydroxy-isovalerate. The chain is Ketol-acid reductoisomerase (NADP(+)) from Phenylobacterium zucineum (strain HLK1).